Consider the following 489-residue polypeptide: 6-phosphogluconate dehydrogenase, decarboxylating 1 (489 aa).

NADP(+)-binding positions include 9–14 and 32–34; these read GLAVMG and NRT. Position 50 is a phosphoserine (Ser50). Residues 74–76 and Asn102 each bind NADP(+); that span reads VKA. Substrate contacts are provided by residues Asn102 and 128-130; that span reads SGG. The active-site Proton acceptor is Lys182. Residue 185 to 186 participates in substrate binding; the sequence is HN. The active-site Proton donor is the Glu189. 5 residues coordinate substrate: Tyr190, Lys259, Arg286, Arg446, and His452.

This sequence belongs to the 6-phosphogluconate dehydrogenase family. As to quaternary structure, homodimer.

The protein resides in the cytoplasm. The enzyme catalyses 6-phospho-D-gluconate + NADP(+) = D-ribulose 5-phosphate + CO2 + NADPH. It participates in carbohydrate degradation; pentose phosphate pathway; D-ribulose 5-phosphate from D-glucose 6-phosphate (oxidative stage): step 3/3. In terms of biological role, catalyzes the oxidative decarboxylation of 6-phosphogluconate to ribulose 5-phosphate and CO(2), with concomitant reduction of NADP to NADPH. The polypeptide is 6-phosphogluconate dehydrogenase, decarboxylating 1 (GND1) (Saccharomyces cerevisiae (strain ATCC 204508 / S288c) (Baker's yeast)).